A 1728-amino-acid chain; its full sequence is Protein NETWORKED 1A (1728 aa).

In terms of domain architecture, NAB spans 13–92; sequence YSWWWDSHIP…ERYDHATVEL (80 aa). Coiled coils occupy residues 155-446, 476-827, 857-885, 954-1016, 1090-1323, 1403-1431, and 1576-1684; these read LGNS…LEIE, MLRD…QVEI, FSEKLIAELESENLEQQMEAEFLVHEIDN, QFQS…AELQ, EQAE…KETV, LLQDMKTRIKTIKQAVAEEKKRRGKLRRR, and RRLA…TKSK. A disordered region spans residues 1419–1441; that stretch reads AEEKKRRGKLRRRSSSHRSKDRK. The segment covering 1424 to 1439 has biased composition (basic residues); that stretch reads RRGKLRRRSSSHRSKD.

Belongs to the NET family. As to quaternary structure, interacts with F-actin. Expressed in root meristems and at very low levels throughout mature vasculature.

The protein resides in the cytoplasm. It localises to the cytoskeleton. The protein localises to the cell membrane. Its subcellular location is the cell junction. It is found in the plasmodesma. Functionally, plant-specific actin binding protein. Associates with F-actin at the plasma membrane and plasmodesmata. May be part of a membrane-cytoskeletal adapter complex. This chain is Protein NETWORKED 1A, found in Arabidopsis thaliana (Mouse-ear cress).